The primary structure comprises 357 residues: tRNA N6-adenosine threonylcarbamoyltransferase (357 aa).

Positions 115 and 119 each coordinate Fe cation. Residues 137-141 (LASGG), Asp-170, Gly-183, and Asn-281 contribute to the substrate site. Fe cation is bound at residue Asp-309.

Belongs to the KAE1 / TsaD family. Requires Fe(2+) as cofactor.

The protein resides in the cytoplasm. It catalyses the reaction L-threonylcarbamoyladenylate + adenosine(37) in tRNA = N(6)-L-threonylcarbamoyladenosine(37) in tRNA + AMP + H(+). Its function is as follows. Required for the formation of a threonylcarbamoyl group on adenosine at position 37 (t(6)A37) in tRNAs that read codons beginning with adenine. Is involved in the transfer of the threonylcarbamoyl moiety of threonylcarbamoyl-AMP (TC-AMP) to the N6 group of A37, together with TsaE and TsaB. TsaD likely plays a direct catalytic role in this reaction. In Nitrobacter hamburgensis (strain DSM 10229 / NCIMB 13809 / X14), this protein is tRNA N6-adenosine threonylcarbamoyltransferase.